The chain runs to 184 residues: UPF0301 protein RSKD131_2391 (184 aa).

It belongs to the UPF0301 (AlgH) family.

This chain is UPF0301 protein RSKD131_2391, found in Cereibacter sphaeroides (strain KD131 / KCTC 12085) (Rhodobacter sphaeroides).